The primary structure comprises 305 residues: Mitochondrial brown fat uncoupling protein 1 (305 aa).

The Mitochondrial intermembrane segment spans residues 1-10; it reads MVGHAATDVP. Residues 11–32 traverse the membrane as a helical segment; sequence PTMAVKIFSAGVAACVADIITF. 3 Solcar repeats span residues 11–102, 109–199, and 208–293; these read PTMA…VQEF, ASLG…MKEA, and DDVP…LKRE. At 33–73 the chain is on the mitochondrial matrix side; it reads PLDTAKVRLQIQGECLTSSAFRYKGVLGTIITLAKTEGPVK. Lys56 serves as a coordination point for fatty acid 16:0. Residues 74 to 96 traverse the membrane as a helical segment; sequence LYSGLPAGLQRQISFASLRIGLY. Topologically, residues 97–114 are mitochondrial intermembrane; sequence DTVQEFFTTGKEASLGSK. A helical transmembrane segment spans residues 115-131; sequence ISAGLTTGGVAVFIGQP. Residues 132-176 are Mitochondrial matrix-facing; it reads TEVVKVRLQAQSHLHGPKPRYTGTYNAYRIIATTEGLTGLWKGTT. Residues 177 to 193 traverse the membrane as a helical segment; sequence PNLTRNVIINCTELVTY. Over 194–210 the chain is Mitochondrial intermembrane; that stretch reads DLMKEALVKNKLLADDV. A helical membrane pass occupies residues 211–230; that stretch reads PCHFVSAVVAGFCTTVLSSP. Residues 231–264 are Mitochondrial matrix-facing; that stretch reads VDVVKTRFVNSSPGQYTSVPNCAMMMLTREGPSA. The residue at position 252 (Cys252) is a Cysteine sulfenic acid (-SOH). The chain crosses the membrane as a helical span at residues 265 to 287; the sequence is FFKGFVPSFLRLGSWNIIMFVCF. Lys267 lines the fatty acid 16:0 pocket. Residues 288-305 lie on the Mitochondrial intermembrane side of the membrane; sequence EQLKRELMKSRQAMDCAT.

The protein belongs to the mitochondrial carrier (TC 2.A.29) family. Most probably functions as a monomer. Binds one purine nucleotide per monomer. However, has also been suggested to function as a homodimer or a homotetramer. Tightly associates with cardiolipin in the mitochondrion inner membrane; may stabilize and regulate its activity. Post-translationally, may undergo sulfenylation upon cold exposure. May increase the sensitivity of UCP1 thermogenic function to the activation by noradrenaline probably through structural effects. May undergo ubiquitin-mediated proteasomal degradation.

The protein resides in the mitochondrion inner membrane. It catalyses the reaction H(+)(in) = H(+)(out). With respect to regulation, has no constitutive proton transporter activity and has to be activated by long-chain fatty acids/LCFAs. Inhibited by purine nucleotides. Both purine nucleotides and LCFAs bind the cytosolic side of the transporter and directly compete to activate or inhibit it. Activated by noradrenaline and reactive oxygen species. Despite lacking canonical translational encoding for selenocysteine, a small pool of the protein has been observed to selectively incorporate selenocysteine at 'Cys-252'. Selenocysteine-modified protein is highly sensitive to redox modification and may constitute a pool of protein highly sensitive to activation by elevated levels of reactive oxygen species (ROS). Its function is as follows. Mitochondrial protein responsible for thermogenic respiration, a specialized capacity of brown adipose tissue and beige fat that participates in non-shivering adaptive thermogenesis to temperature and diet variations and more generally to the regulation of energy balance. Functions as a long-chain fatty acid/LCFA and proton symporter, simultaneously transporting one LCFA and one proton through the inner mitochondrial membrane. However, LCFAs remaining associated with the transporter via their hydrophobic tails, it results in an apparent transport of protons activated by LCFAs. Thereby, dissipates the mitochondrial proton gradient and converts the energy of substrate oxydation into heat instead of ATP. Regulates the production of reactive oxygen species/ROS by mitochondria. This Ovis aries (Sheep) protein is Mitochondrial brown fat uncoupling protein 1.